A 1774-amino-acid chain; its full sequence is Receptor-mediated endocytosis protein 6 homolog (1774 aa).

Residues 157–396 (ELLLKLLREL…EDVVAILPQQ (240 aa)) form the Ras-GAP domain. Disordered stretches follow at residues 444–480 (IPKQ…NNRS), 517–564 (PLAN…PAPT), 661–727 (AAHS…HHHG), 784–811 (ENTL…RNFS), 869–947 (AEID…EDSA), 983–1102 (ESSF…EEQP), 1115–1142 (QEEQ…SMEQ), and 1214–1342 (RAGA…GGRS). 2 stretches are compositionally biased toward low complexity: residues 519-533 (ANGQ…SASN) and 540-557 (SSHS…AAPA). The span at 674–683 (QQERDVHENE) shows a compositional bias: basic and acidic residues. A compositionally biased stretch (polar residues) spans 688–713 (DMVSANVSGRGTPNISGRDTPSSQVT). The span at 794-809 (RGGDRGDRGDRDRDRN) shows a compositional bias: basic and acidic residues. Gly residues predominate over residues 887-905 (PGSGGGAGVPEAGGGGGVV). A compositionally biased stretch (basic and acidic residues) spans 929–944 (DPDRERLRNGSERSQE). Polar residues predominate over residues 1011-1027 (MRRQTSAESSISNQSLN). The segment covering 1038 to 1047 (LAKHHHHHQH) has biased composition (basic residues). Positions 1048–1060 (RDRDRDRDRDRDH) are enriched in basic and acidic residues. The segment covering 1061–1076 (REHHHKSAALKKKKHQ) has biased composition (basic residues). A compositionally biased stretch (basic and acidic residues) spans 1077-1087 (EHKEHQHRDLI). The segment covering 1091–1101 (DCSEDKDEEEQ) has biased composition (acidic residues). Residues 1115-1125 (QEEQQQQQQQQ) are compositionally biased toward low complexity. Residues 1246 to 1291 (SADKEQQPYRDRERERDRERDRERDRDRERDRDRDRDRDRDREHHS) are compositionally biased toward basic and acidic residues. The span at 1310–1335 (SSSSKNNAIAIAAPSSINPNPSPSSA) shows a compositional bias: low complexity. Residues 1516-1546 (RHRQQLLLRSEQLEQLEVRLRSEARSCQRCL) adopt a coiled-coil conformation. In terms of domain architecture, VPS9 spans 1635 to 1774 (VSRDTVLSAH…KFIKTMDYLD (140 aa)).

The protein belongs to the GAPVD1 family.

It is found in the membrane. Functionally, acts both as a GTPase-activating protein (GAP) and a guanine nucleotide exchange factor (GEF), and participates in endocytosis. This is Receptor-mediated endocytosis protein 6 homolog from Drosophila pseudoobscura pseudoobscura (Fruit fly).